An 895-amino-acid polypeptide reads, in one-letter code: Putative endoplasmic reticulum metallopeptidase 1-B (895 aa).

A disordered region spans residues 1–27 (MSTGIRRRHADEKKNILEKESLQNDET). Topologically, residues 1-39 (MSTGIRRRHADEKKNILEKESLQNDETQREMEKDISLLR) are cytoplasmic. Residues 9–27 (HADEKKNILEKESLQNDET) are compositionally biased toward basic and acidic residues. A helical membrane pass occupies residues 40 to 60 (PAHWNFIGLFFLVLIIGTTFL). Residues 61–374 (HKCLPEPKDP…KPAEYADRKT (314 aa)) lie on the Lumenal side of the membrane. N156 carries N-linked (GlcNAc...) asparagine glycosylation. Zn(2+) is bound by residues H180 and D192. Residue E226 is the Proton acceptor of the active site. Positions 227, 253, and 329 each coordinate Zn(2+). Residues 375-395 (VFFDFLGLFVIIYPLSIAHLV) form a helical membrane-spanning segment. Topologically, residues 396–424 (NMLTICTVIALMSHRFYSKTFITFLALRD) are cytoplasmic. The chain crosses the membrane as a helical span at residues 425–445 (YVLTILTIALVLKAMTFMSLF). Topologically, residues 446–457 (TYGALRWYTRHW) are lumenal. The chain crosses the membrane as a helical span at residues 458 to 478 (LALVAYGLPSVWAGISVQGLL). Residues 479–489 (TARLAPKAREE) are Cytoplasmic-facing. A helical membrane pass occupies residues 490 to 512 (YGSTLELIHLTLISGILLAFTYY). The Lumenal portion of the chain corresponds to 513 to 515 (DIA). Residues 516–538 (SGFLFALLLVPAIKSIITYFGAW) traverse the membrane as a helical segment. Topologically, residues 539–553 (PTCPTFNTILTLILS) are cytoplasmic. The helical transmembrane segment at 554-574 (FPGCAMAIYTTEMLLSIFIPI) threads the bilayer. Residues 575 to 584 (MGRSSYNPEP) are Lumenal-facing. A helical membrane pass occupies residues 585–605 (AVSFFVAFSAGCIVLSLGGLV). Residues 606-619 (AKSRNSRSSNEAGL) lie on the Cytoplasmic side of the membrane. The chain crosses the membrane as a helical span at residues 620–640 (LELIYNILGVLLVTLTILYVF). Residues 641 to 895 (SSFWPSPYRF…WNVDQVYKYF (255 aa)) lie on the Lumenal side of the membrane. 2 N-linked (GlcNAc...) asparagine glycosylation sites follow: N679 and N796.

Belongs to the peptidase M28 family. It depends on Zn(2+) as a cofactor.

The protein resides in the endoplasmic reticulum membrane. The chain is Putative endoplasmic reticulum metallopeptidase 1-B from Caenorhabditis elegans.